Reading from the N-terminus, the 221-residue chain is uncharacterized protein (221 aa).

Residues 33–167 (RPAKSAVMLY…VSPGANLELL (135 aa)) form the MOSC domain.

This is an uncharacterized protein from Bacillus subtilis (strain 168).